The chain runs to 509 residues: Putative Rieske 2Fe-2S iron-sulfur protein YhfW (509 aa).

A Rieske domain is found at 423–509 (KPDVQFEDIS…IKPLKQIDLD (87 aa)). Positions 463, 465, 481, and 484 each coordinate [2Fe-2S] cluster. A disulfide bond links C468 and C483.

Belongs to the Rieske iron-sulfur protein family. It depends on [2Fe-2S] cluster as a cofactor.

The protein is Putative Rieske 2Fe-2S iron-sulfur protein YhfW (yhfW) of Bacillus subtilis (strain 168).